The chain runs to 401 residues: uncharacterized protein (401 aa).

7 helical membrane-spanning segments follow: residues 44 to 64, 69 to 89, 99 to 119, 130 to 150, 201 to 221, 246 to 266, and 286 to 306; these read LKYT…LVFI, LYSF…FVLL, LVFN…LIIF, ILST…SIIP, FIYA…LYIL, ILFY…SFVA, and LFFS…GTVV.

It localises to the cell membrane. This is an uncharacterized protein from Mycoplasma pneumoniae (strain ATCC 29342 / M129 / Subtype 1) (Mycoplasmoides pneumoniae).